The primary structure comprises 309 residues: Probable manganese-dependent inorganic pyrophosphatase (309 aa).

Mn(2+) is bound by residues histidine 9, aspartate 13, aspartate 15, aspartate 75, histidine 97, and aspartate 149.

This sequence belongs to the PPase class C family. It depends on Mn(2+) as a cofactor.

Its subcellular location is the cytoplasm. The enzyme catalyses diphosphate + H2O = 2 phosphate + H(+). This is Probable manganese-dependent inorganic pyrophosphatase from Staphylococcus epidermidis (strain ATCC 35984 / DSM 28319 / BCRC 17069 / CCUG 31568 / BM 3577 / RP62A).